The primary structure comprises 429 residues: Methylenetetrahydrofolate--tRNA-(uracil-5-)-methyltransferase TrmFO (429 aa).

7–12 provides a ligand contact to FAD; the sequence is GAGLAG.

The protein belongs to the MnmG family. TrmFO subfamily. The cofactor is FAD.

It localises to the cytoplasm. The catalysed reaction is uridine(54) in tRNA + (6R)-5,10-methylene-5,6,7,8-tetrahydrofolate + NADH + H(+) = 5-methyluridine(54) in tRNA + (6S)-5,6,7,8-tetrahydrofolate + NAD(+). The enzyme catalyses uridine(54) in tRNA + (6R)-5,10-methylene-5,6,7,8-tetrahydrofolate + NADPH + H(+) = 5-methyluridine(54) in tRNA + (6S)-5,6,7,8-tetrahydrofolate + NADP(+). Its function is as follows. Catalyzes the folate-dependent formation of 5-methyl-uridine at position 54 (M-5-U54) in all tRNAs. This chain is Methylenetetrahydrofolate--tRNA-(uracil-5-)-methyltransferase TrmFO, found in Thermosipho africanus (strain TCF52B).